Here is a 416-residue protein sequence, read N- to C-terminus: D-amino acid dehydrogenase (416 aa).

3–17 (ITILGSGVIGVTTAY) is a binding site for FAD.

It belongs to the DadA oxidoreductase family. It depends on FAD as a cofactor.

It carries out the reaction a D-alpha-amino acid + A + H2O = a 2-oxocarboxylate + AH2 + NH4(+). Oxidative deamination of D-amino acids. The protein is D-amino acid dehydrogenase of Brucella suis biovar 1 (strain 1330).